The following is a 1023-amino-acid chain: 2-oxoglutarate dehydrogenase complex component E1 (1023 aa).

The transit peptide at 1 to 40 (MFHLRTCAAKLRPLTASQTVKTFSQNRPAAARTFGQIRCY) directs the protein to the mitochondrion. K74 carries the N6-succinyllysine modification. S100 is modified (phosphoserine). H143, D156, and D158 together coordinate Ca(2+). R312 provides a ligand contact to thiamine diphosphate. The residue at position 401 (K401) is an N6-acetyllysine. Thiamine diphosphate contacts are provided by D411, N444, and I446. Mg(2+) contacts are provided by D411, N444, and I446. K534 is covalently cross-linked (Glycyl lysine isopeptide (Lys-Gly) (interchain with G-Cter in ubiquitin)). The residue at position 564 (K564) is an N6-succinyllysine. Q676 contributes to the thiamine diphosphate binding site. K970 carries the N6-acetyllysine modification.

This sequence belongs to the alpha-ketoglutarate dehydrogenase family. Homodimer. The 2-oxoglutarate dehydrogenase complex is composed of OGDH (2-oxoglutarate dehydrogenase; E1), DLST (dihydrolipoamide succinyltransferase; E2), DLD (dihydrolipoamide dehydrogenase; E3) and the assembly factor KGD4. It contains multiple copies of the three enzymatic components (E1, E2 and E3). In the nucleus, the 2-oxoglutarate dehydrogenase complex associates with KAT2A. Interacts with ABHD11; this interaction maintains the functional lipoylation of the 2-oxoglutarate dehydrogenase complex. It depends on thiamine diphosphate as a cofactor. Requires Mg(2+) as cofactor.

It is found in the mitochondrion. The protein localises to the nucleus. The enzyme catalyses N(6)-[(R)-lipoyl]-L-lysyl-[protein] + 2-oxoglutarate + H(+) = N(6)-[(R)-S(8)-succinyldihydrolipoyl]-L-lysyl-[protein] + CO2. With respect to regulation, calcium ions and ADP stimulate, whereas ATP and NADH reduce catalytic activity. Functionally, 2-oxoglutarate dehydrogenase (E1o) component of the 2-oxoglutarate dehydrogenase complex (OGDHC). Participates in the first step, rate limiting for the overall conversion of 2-oxoglutarate to succinyl-CoA and CO(2) catalyzed by the whole OGDHC. Catalyzes the irreversible decarboxylation of 2-oxoglutarate (alpha-ketoglutarate) via the thiamine diphosphate (ThDP) cofactor and subsequent transfer of the decarboxylated acyl intermediate on an oxidized dihydrolipoyl group that is covalently amidated to the E2 enzyme (dihydrolipoyllysine-residue succinyltransferase or DLST). Plays a key role in the Krebs (citric acid) cycle, which is a common pathway for oxidation of fuel molecules, including carbohydrates, fatty acids, and amino acids. Can catalyze the decarboxylation of 2-oxoadipate in vitro, but at a much lower rate than 2-oxoglutarate. Mainly active in the mitochondrion. A fraction of the 2-oxoglutarate dehydrogenase complex also localizes in the nucleus and is required for lysine succinylation of histones: associates with KAT2A on chromatin and provides succinyl-CoA to histone succinyltransferase KAT2A. This chain is 2-oxoglutarate dehydrogenase complex component E1, found in Bos taurus (Bovine).